Reading from the N-terminus, the 32-residue chain is 24 kDa flagellin (32 aa).

It belongs to the archaeal flagellin family. Glycosylated.

The protein resides in the archaeal flagellum. Flagellin is the subunit protein which polymerizes to form the filaments of archaeal flagella. The protein is 24 kDa flagellin of Methanospirillum hungatei.